The chain runs to 367 residues: Protein TlpB (367 aa).

A run of 5 helical transmembrane segments spans residues 15–35, 53–73, 83–103, 124–144, and 153–173; these read ILISFLFIISAIAKMYPSPYF, IIAPWFSRILIGIELALGILI, IIPITILLLAVFVGHLSYVTF, IQAIIKNIIAIFLLVYLFFLL, and FYVVIGITLATIISLFLLAPI.

It is found in the membrane. This chain is Protein TlpB (tlpB), found in Flavobacterium psychrophilum.